Here is an 813-residue protein sequence, read N- to C-terminus: Homeobox-leucine zipper protein ROC4 (813 aa).

Residues 62–112 are disordered; it reads EVENEMSRSGSDHLDVVSCGDAGGGGGDDDDDEDAEHGNPPKRKKRYHRHT. Residues 101 to 112 show a composition bias toward basic residues; that stretch reads PPKRKKRYHRHT. Residues 104 to 163 constitute a DNA-binding region (homeobox); sequence RKKRYHRHTPQQIQELEAMFKECPHPDEKQRAELSKRLGLEPRQVKFWFQNRRTQMKMQL. The stretch at 152–191 forms a coiled coil; the sequence is FQNRRTQMKMQLERHENSLLKQENDKLRSENLSIREATSN. Residues 306–559 form the START domain; sequence AGIDKSLFLE…LQRQCECLAL (254 aa).

Belongs to the HD-ZIP homeobox family. Class IV subfamily.

Its subcellular location is the nucleus. Functionally, probable transcription factor. The polypeptide is Homeobox-leucine zipper protein ROC4 (ROC4) (Oryza sativa subsp. japonica (Rice)).